Consider the following 221-residue polypeptide: Thiopurine S-methyltransferase (221 aa).

Residues Trp12, Leu47, Glu68, and Arg125 each coordinate S-adenosyl-L-methionine.

The protein belongs to the class I-like SAM-binding methyltransferase superfamily. TPMT family.

It is found in the cytoplasm. It carries out the reaction S-adenosyl-L-methionine + a thiopurine = S-adenosyl-L-homocysteine + a thiopurine S-methylether.. This is Thiopurine S-methyltransferase from Legionella pneumophila (strain Corby).